The sequence spans 585 residues: ATP-dependent lipid A-core flippase (585 aa).

A run of 5 helical transmembrane segments spans residues Leu-16–Ile-36, Phe-66–Phe-86, Ile-156–Val-176, Ala-252–Leu-272, and Leu-278–Met-298. The 285-residue stretch at Val-29–Arg-313 folds into the ABC transmembrane type-1 domain. Residues Ile-345–Ile-581 form the ABC transporter domain. Gly-379 to Ser-386 contributes to the ATP binding site.

The protein belongs to the ABC transporter superfamily. Lipid exporter (TC 3.A.1.106) family. Homodimer.

It localises to the cell inner membrane. It catalyses the reaction ATP + H2O + lipid A-core oligosaccharideSide 1 = ADP + phosphate + lipid A-core oligosaccharideSide 2.. In terms of biological role, involved in lipopolysaccharide (LPS) biosynthesis. Translocates lipid A-core from the inner to the outer leaflet of the inner membrane. Transmembrane domains (TMD) form a pore in the inner membrane and the ATP-binding domain (NBD) is responsible for energy generation. This Photobacterium profundum (strain SS9) protein is ATP-dependent lipid A-core flippase.